The sequence spans 442 residues: tRNA modification GTPase MnmE (442 aa).

3 residues coordinate (6S)-5-formyl-5,6,7,8-tetrahydrofolate: Arg-27, Glu-84, and Lys-124. A TrmE-type G domain is found at 221 to 366 (GFQIVILGAP…LMELISQASA (146 aa)). Residues 231-236 (NAGKSS), 250-256 (TEEPGTT), 275-278 (DTAG), and 329-332 (NKAD) contribute to the GTP site. Mg(2+) contacts are provided by Ser-235 and Thr-256. Residue Lys-442 coordinates (6S)-5-formyl-5,6,7,8-tetrahydrofolate.

The protein belongs to the TRAFAC class TrmE-Era-EngA-EngB-Septin-like GTPase superfamily. TrmE GTPase family. In terms of assembly, homodimer. Heterotetramer of two MnmE and two MnmG subunits. Requires K(+) as cofactor.

The protein localises to the cytoplasm. Exhibits a very high intrinsic GTPase hydrolysis rate. Involved in the addition of a carboxymethylaminomethyl (cmnm) group at the wobble position (U34) of certain tRNAs, forming tRNA-cmnm(5)s(2)U34. This is tRNA modification GTPase MnmE from Chelativorans sp. (strain BNC1).